Reading from the N-terminus, the 214-residue chain is 3-demethoxyubiquinol 3-hydroxylase (214 aa).

Residues glutamate 63, glutamate 93, histidine 96, glutamate 145, glutamate 177, and histidine 180 each contribute to the Fe cation site.

It belongs to the COQ7 family. Requires Fe cation as cofactor.

The protein localises to the cell membrane. The catalysed reaction is a 5-methoxy-2-methyl-3-(all-trans-polyprenyl)benzene-1,4-diol + AH2 + O2 = a 3-demethylubiquinol + A + H2O. It participates in cofactor biosynthesis; ubiquinone biosynthesis. Functionally, catalyzes the hydroxylation of 2-nonaprenyl-3-methyl-6-methoxy-1,4-benzoquinol during ubiquinone biosynthesis. The chain is 3-demethoxyubiquinol 3-hydroxylase from Nitrosococcus oceani (strain ATCC 19707 / BCRC 17464 / JCM 30415 / NCIMB 11848 / C-107).